The sequence spans 354 residues: Thiamine thiazole synthase (354 aa).

Substrate is bound by residues Ala83, 104-105 (EA), Gly112, and Val177. 2,3-didehydroalanine (Cys) is present on Cys210. Substrate-binding positions include Asp212, His227, Met305, and 315–317 (RMG).

Belongs to the THI4 family. Homooctamer. Fe cation serves as cofactor. In terms of processing, during the catalytic reaction, a sulfide is transferred from Cys-210 to a reaction intermediate, generating a dehydroalanine residue.

The protein resides in the cytoplasm. It is found in the nucleus. The catalysed reaction is [ADP-thiazole synthase]-L-cysteine + glycine + NAD(+) = [ADP-thiazole synthase]-dehydroalanine + ADP-5-ethyl-4-methylthiazole-2-carboxylate + nicotinamide + 3 H2O + 2 H(+). Its function is as follows. Involved in biosynthesis of the thiamine precursor thiazole. Catalyzes the conversion of NAD and glycine to adenosine diphosphate 5-(2-hydroxyethyl)-4-methylthiazole-2-carboxylic acid (ADT), an adenylated thiazole intermediate. The reaction includes an iron-dependent sulfide transfer from a conserved cysteine residue of the protein to a thiazole intermediate. The enzyme can only undergo a single turnover, which suggests it is a suicide enzyme. May have additional roles in adaptation to various stress conditions and in DNA damage tolerance. In Candida albicans (strain SC5314 / ATCC MYA-2876) (Yeast), this protein is Thiamine thiazole synthase.